Here is a 631-residue protein sequence, read N- to C-terminus: ESX-3 secretion system protein EccA3 (631 aa).

385–392 (GPPGTGKT) serves as a coordination point for ATP.

The protein belongs to the CbxX/CfxQ family. Part of the ESX-3 / type VII secretion system (T7SS), which is composed of cytosolic and membrane components.

The protein resides in the cytoplasm. Functionally, part of the ESX-3 specialized secretion system, which is important for iron and zinc uptake or homeostasis. EccA3 exhibits ATPase activity and may provide energy for the export of ESX-3 substrates. The sequence is that of ESX-3 secretion system protein EccA3 from Mycobacterium tuberculosis (strain CDC 1551 / Oshkosh).